The primary structure comprises 310 residues: MKTLIRKLTRTAITLVLVILAFIAIFRAWVYYTESPWTRDARFSADVVAIAPDVAGLITNVNVHDNQLVKKGQVLFTIDQPRYQKALAEAEADVAYYSVLAQEKRQEASRRNRLGVQAMSREEIDQANNVLQTVLHQLAKAQATRDLAKLDLERTVIRAPADGWVTNLNVYTGEFITRGSTAVALVKQNTFYVLAYMEETKLEGVRPGYRAEITPLGSNRVLKGTVDSIAAGVTNASSTRDAKGMATIDSNLEWVRLAQRVPVRIRLDAQPENLWPAGTTATVVVTGKDDRDESQDSFFRKMAHRLREFG.

The helical transmembrane segment at alanine 12–tyrosine 32 threads the bilayer.

Belongs to the membrane fusion protein (MFP) (TC 8.A.1) family.

It localises to the cell inner membrane. Functionally, forms an efflux pump with AaeB. The chain is p-hydroxybenzoic acid efflux pump subunit AaeA from Escherichia fergusonii (strain ATCC 35469 / DSM 13698 / CCUG 18766 / IAM 14443 / JCM 21226 / LMG 7866 / NBRC 102419 / NCTC 12128 / CDC 0568-73).